We begin with the raw amino-acid sequence, 454 residues long: MWGGRFSGSLAEHMRLFNDSFPIDRRLWAEDIRGSIAWANGLERAGILQAAECQELIAGLRQVYQEFEEGLFLPLTSDEDIHTAVERRLGDFIGALAGKLHTGRSRNDQVATDTRLWTLGALKLADDLIRDVQAALLEQAKAVGEAMLPGYTHLQRAQPVLLSHALLAHFWRLDRDRQRLHDATKRVSVLPLGSGALAGTAFAVDRAALAAELGFTSISQNSLDATSDRDYIVEILAAIALLGVHISQLAEDWIIWSSSEWGFVALDDAYSTGSSLMPQKKNPDSLELARGKSGRLIGNLITVLTLLKGLPSAYDKDLQEDKAPLFDAIDTLSLTLPVVAGAIRTARFNTERMESALDDAMLATDVADELVRRGVPFREAHHIAGRLVREAEQRGVGMRQLPAESFVAAHPSLTDVAGLFDFARSVAMRDVPGGTAPNAVRDQLIAAQHVLAEG.

It belongs to the lyase 1 family. Argininosuccinate lyase subfamily.

The protein localises to the cytoplasm. It catalyses the reaction 2-(N(omega)-L-arginino)succinate = fumarate + L-arginine. It functions in the pathway amino-acid biosynthesis; L-arginine biosynthesis; L-arginine from L-ornithine and carbamoyl phosphate: step 3/3. The polypeptide is Argininosuccinate lyase (Herpetosiphon aurantiacus (strain ATCC 23779 / DSM 785 / 114-95)).